A 432-amino-acid polypeptide reads, in one-letter code: Adenylosuccinate synthetase (432 aa).

GTP-binding positions include 13–19 and 41–43; these read GDEGKGK and GHT. Asp-14 serves as the catalytic Proton acceptor. The Mg(2+) site is built by Asp-14 and Gly-41. IMP contacts are provided by residues 14–17, 39–42, Thr-130, Arg-144, Gln-225, Thr-240, and Arg-304; these read DEGK and NAGH. His-42 serves as the catalytic Proton donor. 300–306 lines the substrate pocket; the sequence is ATTGRRR. GTP contacts are provided by residues Arg-306, 332-334, and 415-417; these read KLD and STG.

This sequence belongs to the adenylosuccinate synthetase family. As to quaternary structure, homodimer. Mg(2+) serves as cofactor.

The protein localises to the cytoplasm. It carries out the reaction IMP + L-aspartate + GTP = N(6)-(1,2-dicarboxyethyl)-AMP + GDP + phosphate + 2 H(+). The protein operates within purine metabolism; AMP biosynthesis via de novo pathway; AMP from IMP: step 1/2. Plays an important role in the de novo pathway of purine nucleotide biosynthesis. Catalyzes the first committed step in the biosynthesis of AMP from IMP. The polypeptide is Adenylosuccinate synthetase (Cronobacter sakazakii (strain ATCC BAA-894) (Enterobacter sakazakii)).